A 258-amino-acid chain; its full sequence is Spindlin-2 (258 aa).

Residues 1-47 are disordered; it reads MKTPHKKATARQQTREIVDDHTLSASMRKKKISQKKQRGRPSSQTRR. Over residues 13–22 the composition is skewed to basic and acidic residues; sequence QTREIVDDHT. The span at 27 to 39 shows a compositional bias: basic residues; the sequence is MRKKKISQKKQRG. Tudor-like domain regions lie at residues 50-99, 129-178, and 210-255; these read VGCR…LELH, IGKA…YQLL, and IGKH…YDLV. Histone H3K4me3 and H3R8me2a binding stretches follow at residues Glu138 and 246–248; that span reads DFH.

The protein belongs to the SPIN/STSY family. In terms of assembly, interacts with C11orf84/SPINDOC.

It localises to the nucleus. Functionally, may be involved in the regulation of cell cycle progression. Exhibits H3K4me3-binding activity. This Bos taurus (Bovine) protein is Spindlin-2 (SPIN2).